Consider the following 31-residue polypeptide: Cytochrome b6-f complex subunit 6 (31 aa).

The chain crosses the membrane as a helical span at residues 7–25 (YSGFLLAAPIPASAPFTGL).

Belongs to the PetL family. As to quaternary structure, the 4 large subunits of the cytochrome b6-f complex are cytochrome b6, subunit IV (17 kDa polypeptide, PetD), cytochrome f and the Rieske protein, while the 4 small subunits are PetG, PetL, PetM and PetN. The complex functions as a dimer.

It localises to the plastid. The protein localises to the chloroplast thylakoid membrane. Functionally, component of the cytochrome b6-f complex, which mediates electron transfer between photosystem II (PSII) and photosystem I (PSI), cyclic electron flow around PSI, and state transitions. PetL is important for photoautotrophic growth as well as for electron transfer efficiency and stability of the cytochrome b6-f complex. This is Cytochrome b6-f complex subunit 6 from Huperzia lucidula (Shining clubmoss).